The following is a 78-amino-acid chain: uncharacterized protein (78 aa).

This is an uncharacterized protein from Methanocaldococcus jannaschii (strain ATCC 43067 / DSM 2661 / JAL-1 / JCM 10045 / NBRC 100440) (Methanococcus jannaschii).